We begin with the raw amino-acid sequence, 483 residues long: MAAGCEGIAPPTLGERTVGEEGEPVKPFTPEKAKEIIMSLQQPAIFCNMVFDWPSRHWTAKHLSKVLEGKQIRFRMGLRGTGTVPQYETECSYVDATLEEFLTWNCDQSSISGPFKDYEHSKFWAYADYKYFVTLFEDKTDVFQEVVWSDFGFPGRNGQESTLWIGSFGAHTPCHLDSYGCNLVFQVQGRKRWHLFPPEDTPFLYPTRIPYEESSVFSKINVVNPDLKCFPQFQKARRHMVTLSPGQVLFVPRHWWHYVESLDPVTVSINSWIELEEDHLARVEEAITRMLVCTLKTAEDPHHPRTWLNPTEVEETSHEVNSCYLNSAVCAFFDHCEKAKAVELQVLSANGAEPRVQEEHMEVEQAQGPSLTSRAEKQEAVSLFGPDLIPVTPASEERGGALEGDSEESVSSNGGHFAELPCARRQQTSKGASALTEPLAPRGPMAHSRVFVSTDDLLDCLVNPQVTRMVAQLLIQGKSCDTF.

Residues 1 to 26 (MAAGCEGIAPPTLGERTVGEEGEPVK) form a disordered region. Residues 88 to 208 (ETECSYVDAT…EDTPFLYPTR (121 aa)) are interaction with HSPB1. Residues 124-288 (WAYADYKYFV…HLARVEEAIT (165 aa)) enclose the JmjC domain. Positions 388 to 416 (LIPVTPASEERGGALEGDSEESVSSNGGH) are disordered.

In terms of assembly, interacts with CRYAB and HSPB1.

The protein localises to the cytoplasm. Its function is as follows. May play a role in cellular stress response. The sequence is that of HSPB1-associated protein 1 (Hspbap1) from Mus musculus (Mouse).